The primary structure comprises 299 residues: Nucleotide-binding protein RER_30260 (299 aa).

19–26 (GLSGAGLS) contacts ATP. 70-73 (DVRS) contacts GTP.

It belongs to the RapZ-like family.

Displays ATPase and GTPase activities. The polypeptide is Nucleotide-binding protein RER_30260 (Rhodococcus erythropolis (strain PR4 / NBRC 100887)).